The sequence spans 494 residues: Alpha-amylase A (494 aa).

A signal peptide spans 1-18; sequence MFLAKSIVCLALLAVANA. Pyrrolidone carboxylic acid is present on Gln19. Cys46 and Cys102 form a disulfide bridge. Residues Asn116, Arg165, and Asp174 each coordinate Ca(2+). Cys153 and Cys167 form a disulfide bridge. Residue Arg202 participates in chloride binding. Catalysis depends on Asp204, which acts as the Nucleophile. Position 208 (His208) interacts with Ca(2+). The Proton donor role is filled by Glu241. Chloride contacts are provided by Asn304 and Arg343. 2 disulfide bridges follow: Cys376–Cys382 and Cys448–Cys460.

The protein belongs to the glycosyl hydrolase 13 family. In terms of assembly, monomer. The cofactor is Ca(2+). It depends on chloride as a cofactor.

The catalysed reaction is Endohydrolysis of (1-&gt;4)-alpha-D-glucosidic linkages in polysaccharides containing three or more (1-&gt;4)-alpha-linked D-glucose units.. This chain is Alpha-amylase A (Amy-p), found in Drosophila melanogaster (Fruit fly).